A 287-amino-acid chain; its full sequence is tRNA selenocysteine 1-associated protein 1 (287 aa).

2 consecutive RRM domains span residues 3 to 86 (ASLW…YATY) and 96 to 175 (YSLF…VAIP).

It belongs to the RRM TRSPAP family. In terms of assembly, component of the tRNA(Sec) complex composed at least of EEFSEC, SECISBP2, SEPHS1, SEPSECS, TRNAU1AP and tRNA(Sec). Found in a complex with tRNA(Sec). Interacts with SEPSECS. Associates with mRNP and/or polysomes. Found in a complex with EEFSEC, SECISBP2, TRNAU1AP and tRNA(Sec).

It is found in the nucleus. The protein localises to the cytoplasm. Involved in the early steps of selenocysteine biosynthesis and tRNA(Sec) charging to the later steps resulting in the cotranslational incorporation of selenocysteine into selenoproteins. Stabilizes the SECISBP2, EEFSEC and tRNA(Sec) complex. May be involved in the methylation of tRNA(Sec). Enhances efficiency of selenoproteins synthesis. The polypeptide is tRNA selenocysteine 1-associated protein 1 (TRNAU1AP) (Homo sapiens (Human)).